Consider the following 62-residue polypeptide: Zinc metalloproteinase-disintegrin-like BaG (62 aa).

Residues 24-54 (KTDLLNRSHDNAQLSPINLVVAVIMAHEMGH) form the Peptidase M12B domain. N-linked (GlcNAc...) asparagine glycosylation occurs at Asn29. Residue His50 participates in Zn(2+) binding. Glu51 is a catalytic residue. His54 contributes to the Zn(2+) binding site.

This sequence belongs to the venom metalloproteinase (M12B) family. P-III subfamily. P-IIIc sub-subfamily. In terms of assembly, dimer. It depends on Zn(2+) as a cofactor. In terms of processing, the N-terminus is blocked. Expressed by the venom gland.

The protein resides in the secreted. Inhibited by EDTA, and 1,10-phenanthroline. Snake venom Zinc metalloproteinase that inhibits ADP-induced platelet aggregation and inhibits the alpha-5/beta-1 (ITGA5/ITGB1) integrin, a fibronectin receptor. Has caseinolytic activity. Induces the detachment of cells that are bound to fibronectin. This chain is Zinc metalloproteinase-disintegrin-like BaG, found in Bothrops alternatus (Urutu).